Here is a 357-residue protein sequence, read N- to C-terminus: Decorin (357 aa).

The N-terminal stretch at 1 to 16 (MRLVLLFVLLLPVCLA) is a signal peptide. The propeptide occupies 17–30 (TRFHQKGLFDFMIE). Residue Ser46 is glycosylated (O-linked (Xyl...) (glycosaminoglycan) serine). Intrachain disulfides connect Cys52–Cys58 and Cys56–Cys65. LRR repeat units follow at residues 71-91 (ERVPKDLPPDTTLLDLQNNKI), 92-115 (TEIKEGDFKNLKNLHALILVNNKI), 116-139 (SKISPAAFAPLKKLERLYLSKNNL), 140-160 (KELPENMPKSLQEIRAHENEI), 161-184 (SKLRKAVFNGLNQVIVLELGTNPL), 185-210 (KSSGIENGAFQGMKRLSYIRIADTNI), 211-231 (TSIPKGLPPSLTELHLDGNKI), 232-255 (SKIDAEGLSGLTNLAKLGLSFNSI), 256-279 (SSVENGSLNNVPHLRELHLNNNEL), 280-302 (VRVPSGLGEHKYIQVVYLHNNKI), 303-332 (ASIGINDFCPLGYNTKKATYSGVSLFSNPV), and 333-357 (QYWEIQPSAFRCIHERSAVQIGNYK). Asn209 carries an N-linked (GlcNAc...) asparagine glycan. The N-linked (GlcNAc...) asparagine glycan is linked to Asn260. Residues Cys311 and Cys344 are joined by a disulfide bond.

Belongs to the small leucine-rich proteoglycan (SLRP) family. SLRP class I subfamily. As to quaternary structure, binds to type I and type II collagen, to fibronectin and TGF-beta. Forms a ternary complex with MFAP2 and ELN. In terms of processing, the attached glycosaminoglycan chain can be either chondroitin sulfate or dermatan sulfate depending upon the tissue of origin.

The protein localises to the secreted. It localises to the extracellular space. The protein resides in the extracellular matrix. Functionally, may affect the rate of fibrils formation. This chain is Decorin (DCN), found in Gallus gallus (Chicken).